The chain runs to 305 residues: Carbamate kinase (305 aa).

This sequence belongs to the carbamate kinase family.

Its subcellular location is the cytoplasm. The enzyme catalyses hydrogencarbonate + NH4(+) + ATP = carbamoyl phosphate + ADP + H2O + H(+). Its pathway is metabolic intermediate metabolism; carbamoyl phosphate degradation; CO(2) and NH(3) from carbamoyl phosphate: step 1/1. In Thermoplasma volcanium (strain ATCC 51530 / DSM 4299 / JCM 9571 / NBRC 15438 / GSS1), this protein is Carbamate kinase (arcC).